The following is a 91-amino-acid chain: Virion membrane protein A14 homolog (91 aa).

The Intravirion portion of the chain corresponds to 1 to 12 (MDPLGFFRNRPS). A helical membrane pass occupies residues 13–33 (YVVVFGIILLIVACICAYIEL). The Virion surface segment spans residues 34-46 (SKSGKPADSALRS). The helical transmembrane segment at 47-67 (ISIISFILAILLLLGIILFSG) threads the bilayer. Residues 68–91 (YNRYCTGNVVDESRYATSPGTEIQ) lie on the Intravirion side of the membrane.

Belongs to the chordopoxvirinae A14 family. In terms of assembly, homodimer; disulfide-linked. Interacts with A17. Phosphorylated by viral F10 kinase, phosphorylation state is regulated by H1 phosphatase.

The protein localises to the virion membrane. Envelope protein which is a major component of the mature virion (MV) membrane. Essential for membrane biogenesis. Is required, together with A17, to form bona fide crescents, which can progress to form the immature virion (IV) membrane. A14 and A17 form a lattice that is stabilized by disulfide bonds and serves as an anchor within the viral membrane to which several other proteins important in virion structure and morphogenesis attach. The polypeptide is Virion membrane protein A14 homolog (Fowlpox virus (strain NVSL) (FPV)).